The primary structure comprises 206 residues: Large ribosomal subunit protein uL4 (206 aa).

Residues 63 to 97 (MYKQKGTGRARHHSARAPQFRGGGKAHGPVVRSHE) are disordered. Residues 64–77 (YKQKGTGRARHHSA) show a composition bias toward basic residues.

This sequence belongs to the universal ribosomal protein uL4 family. Part of the 50S ribosomal subunit.

In terms of biological role, one of the primary rRNA binding proteins, this protein initially binds near the 5'-end of the 23S rRNA. It is important during the early stages of 50S assembly. It makes multiple contacts with different domains of the 23S rRNA in the assembled 50S subunit and ribosome. Its function is as follows. Forms part of the polypeptide exit tunnel. The protein is Large ribosomal subunit protein uL4 of Rhizobium johnstonii (strain DSM 114642 / LMG 32736 / 3841) (Rhizobium leguminosarum bv. viciae).